Consider the following 156-residue polypeptide: Transcriptional repressor NrdR (156 aa).

A zinc finger spans residues 3 to 34 (CPKCNSTHSRVVDSRHADEANAIRRRRECENC). An ATP-cone domain is found at 49–139 (LIVVKKDGTR…VYKEFKDVDQ (91 aa)).

Belongs to the NrdR family. It depends on Zn(2+) as a cofactor.

Its function is as follows. Negatively regulates transcription of bacterial ribonucleotide reductase nrd genes and operons by binding to NrdR-boxes. The polypeptide is Transcriptional repressor NrdR (Staphylococcus epidermidis (strain ATCC 35984 / DSM 28319 / BCRC 17069 / CCUG 31568 / BM 3577 / RP62A)).